The chain runs to 78 residues: Large ribosomal subunit protein uL29 (78 aa).

The protein belongs to the universal ribosomal protein uL29 family.

In Rhodococcus erythropolis (strain PR4 / NBRC 100887), this protein is Large ribosomal subunit protein uL29.